A 374-amino-acid chain; its full sequence is Multicilin (374 aa).

Positions E164–L212 form a coiled coil. Residues R230–S260 are disordered. Residues T330–N374 form a TIRT domain region.

This sequence belongs to the geminin family. In terms of assembly, component of the EDM complex, at least composed of e2f4, e2f5, mcidas and tfdp1. As to expression, expressed in multiciliate differentiating cells. Expression is lost by stage 26, when multiciliate cells in the skin are fully differentiated, but is then detected in the developing nephrostomes of the kidneys where multiciliate cells form at later stages.

Its subcellular location is the nucleus. Functionally, transcription regulator specifically required for multiciliate cell differentiation. Acts in a multiprotein complex containing E2F4 and E2F5 that binds and activates genes required for centriole biogenesis. Activates genes required for centriole assembly (plk4, cep152) and genes specifically required for motile cilia formation (foxj1). Also promotes the deuterosome pathway of centriole biogenesis by activating expression of ccdc67/deup1, but not its paralog cep63. This Xenopus laevis (African clawed frog) protein is Multicilin (mcidas).